Consider the following 406-residue polypeptide: O-succinylhomoserine sulfhydrylase (406 aa).

K219 bears the N6-(pyridoxal phosphate)lysine mark.

The protein belongs to the trans-sulfuration enzymes family. MetZ subfamily. In terms of assembly, homotetramer. The cofactor is pyridoxal 5'-phosphate.

The enzyme catalyses O-succinyl-L-homoserine + hydrogen sulfide = L-homocysteine + succinate. Its pathway is amino-acid biosynthesis; L-methionine biosynthesis via de novo pathway; L-homocysteine from O-succinyl-L-homoserine: step 1/1. In terms of biological role, catalyzes the formation of L-homocysteine from O-succinyl-L-homoserine (OSHS) and hydrogen sulfide. The protein is O-succinylhomoserine sulfhydrylase of Mycobacterium tuberculosis (strain CDC 1551 / Oshkosh).